The sequence spans 220 residues: MESRIVLDSRETSLLNTHKVLRNTYFLLGLTLAFSAVVAYISMSLNLPRPGLILMLAGFYGLLFLTYKLSNSGLGILSTFAFTGFLGYTLGPILNVYVSHGAGDIVVLALAGTAAVFFACSAYVLTTKKDMSFLSGTIFALFIVLLLGMVASFFFQSPMLYIAISGLFVVFSTLGILYETSNIIHGGETNYIRATVSIFVSLYNLFISLLNIFSILSNED.

7 consecutive transmembrane segments (helical) span residues 25-45 (YFLL…SMSL), 50-70 (PGLI…YKLS), 74-94 (LGIL…GPIL), 105-125 (IVVL…AYVL), 135-155 (SGTI…SFFF), 158-178 (PMLY…GILY), and 196-216 (VSIF…FSIL).

This sequence belongs to the BI1 family.

It localises to the cell membrane. This is an uncharacterized protein from Pasteurella multocida (strain Pm70).